The sequence spans 356 residues: Peptide chain release factor 1 (356 aa).

Gln235 is subject to N5-methylglutamine.

Belongs to the prokaryotic/mitochondrial release factor family. Post-translationally, methylated by PrmC. Methylation increases the termination efficiency of RF1.

The protein resides in the cytoplasm. Functionally, peptide chain release factor 1 directs the termination of translation in response to the peptide chain termination codons UAG and UAA. This is Peptide chain release factor 1 from Hydrogenobaculum sp. (strain Y04AAS1).